The chain runs to 295 residues: Farnesyl diphosphate synthase (295 aa).

Isopentenyl diphosphate is bound by residues Lys-46, Arg-49, and His-78. 2 residues coordinate Mg(2+): Asp-85 and Asp-91. Arg-96 serves as a coordination point for (2E)-geranyl diphosphate. Arg-97 serves as a coordination point for isopentenyl diphosphate. Lys-180, Thr-181, Gln-220, and Lys-237 together coordinate (2E)-geranyl diphosphate.

This sequence belongs to the FPP/GGPP synthase family. The cofactor is Mg(2+).

Its subcellular location is the cytoplasm. It carries out the reaction isopentenyl diphosphate + (2E)-geranyl diphosphate = (2E,6E)-farnesyl diphosphate + diphosphate. The chain is Farnesyl diphosphate synthase (ispA) from Haemophilus influenzae (strain ATCC 51907 / DSM 11121 / KW20 / Rd).